Reading from the N-terminus, the 172-residue chain is NADH-quinone oxidoreductase subunit B (172 aa).

[4Fe-4S] cluster-binding residues include cysteine 46, cysteine 47, cysteine 111, and cysteine 141.

Belongs to the complex I 20 kDa subunit family. In terms of assembly, NDH-1 is composed of 14 different subunits. Subunits NuoB, C, D, E, F, and G constitute the peripheral sector of the complex. [4Fe-4S] cluster is required as a cofactor.

Its subcellular location is the cell membrane. It catalyses the reaction a quinone + NADH + 5 H(+)(in) = a quinol + NAD(+) + 4 H(+)(out). Its function is as follows. NDH-1 shuttles electrons from NADH, via FMN and iron-sulfur (Fe-S) centers, to quinones in the respiratory chain. The immediate electron acceptor for the enzyme in this species is believed to be a menaquinone. Couples the redox reaction to proton translocation (for every two electrons transferred, four hydrogen ions are translocated across the cytoplasmic membrane), and thus conserves the redox energy in a proton gradient. This chain is NADH-quinone oxidoreductase subunit B, found in Brevibacillus brevis (strain 47 / JCM 6285 / NBRC 100599).